Consider the following 604-residue polypeptide: MTDVSVSKIRNFCIIAHIDHGKSTLADRLLQETGTVQAREMKEQFLDNMELERERGITIKLQAARMNYRAQDGEQYVLNLIDTPGHVDFSYEVSRSLQACEGALLVVDASQGVEAQTLANVYLALENDLEIIPVPNKIDLPGADPERVKREIEEVIGLDCSGAIEASAKSGIGIGEILESIVHLVPPPSDTTGEPLRALIFDSYYDPYRGVIVYFRVIDGTVRKGDRIRLMASGKEYEIDELGVLSPNQVQVEELHAGEVGYIAASIKAVADARVGDTITLARARATEPLPGYVEAKPMVFCGLFPTDSDRYPDLRDALEKLQLSDAALQYEPETSSAMGFGFRCGFLGLLHMEIVQERLEREYNLDLITTAPSVVYQVTTLDGEVLRLDNPSKLPPPQQREKIEEPYVKVEIITPENYVGALMDLCQTRRGIFIDMKYLTQERTTLIYEMPLAEVVTDFFDQMKSRTKGYASMEYSLIGYREGELVRMDILINSEPVDPLATIVHRDKAYYVGKALVEKLKELIPRHQFKIPLQAAIGSRVIASESIPALRKDVLAKCYGGDISRKKKLLQKQAKGKKRMKAIGTVDVPQEAFMAVLKLDREG.

The region spanning 7–189 (SKIRNFCIIA…SIVHLVPPPS (183 aa)) is the tr-type G domain. GTP contacts are provided by residues 19 to 24 (DHGKST) and 136 to 139 (NKID).

It belongs to the TRAFAC class translation factor GTPase superfamily. Classic translation factor GTPase family. LepA subfamily.

The protein localises to the cell inner membrane. The enzyme catalyses GTP + H2O = GDP + phosphate + H(+). In terms of biological role, required for accurate and efficient protein synthesis under certain stress conditions. May act as a fidelity factor of the translation reaction, by catalyzing a one-codon backward translocation of tRNAs on improperly translocated ribosomes. Back-translocation proceeds from a post-translocation (POST) complex to a pre-translocation (PRE) complex, thus giving elongation factor G a second chance to translocate the tRNAs correctly. Binds to ribosomes in a GTP-dependent manner. The sequence is that of Elongation factor 4 from Synechococcus sp. (strain ATCC 27144 / PCC 6301 / SAUG 1402/1) (Anacystis nidulans).